Here is a 1009-residue protein sequence, read N- to C-terminus: Delphilin (1009 aa).

Disordered regions lie at residues 28-82 (CRSK…SNTM), 170-193 (EGPV…RSRS), 322-369 (ASPD…SRDT), 414-635 (ELSS…SDNN), and 990-1009 (SETQ…PLAW). Positions 44–53 (RSQDHHERPQ) are enriched in basic and acidic residues. Residues 95–172 (TIRVYRGKKS…MPSLVVEEGP (78 aa)) form the PDZ domain. Over residues 322-332 (ASPDSVDSNPY) the composition is skewed to polar residues. Composition is skewed to low complexity over residues 334–352 (SLDS…SPLP) and 427–439 (DDST…SGSD). Composition is skewed to pro residues over residues 441–455 (IPPP…PPPL), 462–477 (SPLP…PPPA), and 484–493 (IAPPPPPPRP). Residues 521 to 535 (SSPQPSSQPILQLHQ) are compositionally biased toward low complexity. Polar residues predominate over residues 557 to 602 (AQHTRLQHPSQSIYQSQQTTVPRTSPSLTKQKSLHSQPSQQSFEGT). Positions 607-628 (VPPPPPPPLPPPCDPPPLPKPS) are enriched in pro residues. The FH2 domain occupies 629 to 1009 (PKASDNNHMS…SPRIASPLAW (381 aa)).

The protein localises to the postsynaptic cell membrane. Functionally, postsynaptic scaffolding protein. The chain is Delphilin (grid2ip) from Danio rerio (Zebrafish).